The following is a 392-amino-acid chain: Formate-dependent phosphoribosylglycinamide formyltransferase (392 aa).

N(1)-(5-phospho-beta-D-ribosyl)glycinamide-binding positions include 22 to 23 (EL) and glutamate 82. ATP is bound by residues arginine 114, lysine 155, 160 to 165 (SSGHGQ), 195 to 198 (EGFI), and glutamate 203. In terms of domain architecture, ATP-grasp spans 119–307 (RLAAEELGLK…QFALHARAIL (189 aa)). Residues glutamate 266 and glutamate 278 each contribute to the Mg(2+) site. Residues aspartate 285, lysine 355, and 362-363 (RR) each bind N(1)-(5-phospho-beta-D-ribosyl)glycinamide.

It belongs to the PurK/PurT family. In terms of assembly, homodimer.

It is found in the cell inner membrane. It carries out the reaction N(1)-(5-phospho-beta-D-ribosyl)glycinamide + formate + ATP = N(2)-formyl-N(1)-(5-phospho-beta-D-ribosyl)glycinamide + ADP + phosphate + H(+). It participates in purine metabolism; IMP biosynthesis via de novo pathway; N(2)-formyl-N(1)-(5-phospho-D-ribosyl)glycinamide from N(1)-(5-phospho-D-ribosyl)glycinamide (formate route): step 1/1. Its function is as follows. Involved in the de novo purine biosynthesis. Catalyzes the transfer of formate to 5-phospho-ribosyl-glycinamide (GAR), producing 5-phospho-ribosyl-N-formylglycinamide (FGAR). Formate is provided by PurU via hydrolysis of 10-formyl-tetrahydrofolate. The protein is Formate-dependent phosphoribosylglycinamide formyltransferase of Mannheimia haemolytica (Pasteurella haemolytica).